The primary structure comprises 476 residues: Eukaryotic translation initiation factor 3 subunit L (476 aa).

Positions 257–452 (DAIRMFSHIL…DLDYALEKDL (196 aa)) constitute a PCI domain.

It belongs to the eIF-3 subunit L family. In terms of assembly, component of the eukaryotic translation initiation factor 3 (eIF-3) complex.

Its subcellular location is the cytoplasm. In terms of biological role, component of the eukaryotic translation initiation factor 3 (eIF-3) complex, which is involved in protein synthesis of a specialized repertoire of mRNAs and, together with other initiation factors, stimulates binding of mRNA and methionyl-tRNAi to the 40S ribosome. The eIF-3 complex specifically targets and initiates translation of a subset of mRNAs involved in cell proliferation. The chain is Eukaryotic translation initiation factor 3 subunit L from Emericella nidulans (strain FGSC A4 / ATCC 38163 / CBS 112.46 / NRRL 194 / M139) (Aspergillus nidulans).